The primary structure comprises 386 residues: Patatin-B1 (386 aa).

Positions 1–23 (MATTKSFLILFFMILATTSSTCA) are cleaved as a signal peptide. In terms of domain architecture, PNPLA spans 32–229 (LSIDGGGIKG…TVGDPALLSL (198 aa)). Residues 36 to 41 (GGGIKG) carry the GXGXXG motif. Positions 75–79 (GTSTG) match the GXSXG motif. S77 (nucleophile) is an active-site residue. Residue N115 is glycosylated (N-linked (GlcNAc...) asparagine). Catalysis depends on D215, which acts as the Proton acceptor. Residues 215–217 (DGG) carry the DGA/G motif.

Belongs to the patatin family.

It localises to the vacuole. In terms of biological role, probable lipolytic acyl hydrolase (LAH), an activity which is thought to be involved in the response of tubers to pathogens. This chain is Patatin-B1 (PATB1), found in Solanum tuberosum (Potato).